The primary structure comprises 445 residues: 3-phosphoshikimate 1-carboxyvinyltransferase (445 aa).

The 3-phosphoshikimate site is built by K28, S29, and R33. Residue K28 participates in phosphoenolpyruvate binding. G102 and R130 together coordinate phosphoenolpyruvate. 3-phosphoshikimate contacts are provided by S179, S180, Q181, E330, and H357. Q181 provides a ligand contact to phosphoenolpyruvate. Residue E330 is the Proton acceptor of the active site. Residues R361, R405, and K430 each coordinate phosphoenolpyruvate.

Belongs to the EPSP synthase family. In terms of assembly, monomer.

It localises to the cytoplasm. It carries out the reaction 3-phosphoshikimate + phosphoenolpyruvate = 5-O-(1-carboxyvinyl)-3-phosphoshikimate + phosphate. It functions in the pathway metabolic intermediate biosynthesis; chorismate biosynthesis; chorismate from D-erythrose 4-phosphate and phosphoenolpyruvate: step 6/7. In terms of biological role, catalyzes the transfer of the enolpyruvyl moiety of phosphoenolpyruvate (PEP) to the 5-hydroxyl of shikimate-3-phosphate (S3P) to produce enolpyruvyl shikimate-3-phosphate and inorganic phosphate. The sequence is that of 3-phosphoshikimate 1-carboxyvinyltransferase from Bifidobacterium longum (strain DJO10A).